Reading from the N-terminus, the 408-residue chain is 2,3-bisphosphoglycerate-independent phosphoglycerate mutase 1 (408 aa).

This sequence belongs to the BPG-independent phosphoglycerate mutase family. A-PGAM subfamily. In terms of assembly, monomer. It depends on Mn(2+) as a cofactor.

It carries out the reaction (2R)-2-phosphoglycerate = (2R)-3-phosphoglycerate. The protein operates within carbohydrate degradation; glycolysis; pyruvate from D-glyceraldehyde 3-phosphate: step 3/5. In terms of biological role, catalyzes the interconversion of 2-phosphoglycerate and 3-phosphoglycerate. The sequence is that of 2,3-bisphosphoglycerate-independent phosphoglycerate mutase 1 (apgM1) from Archaeoglobus fulgidus (strain ATCC 49558 / DSM 4304 / JCM 9628 / NBRC 100126 / VC-16).